We begin with the raw amino-acid sequence, 218 residues long: Phosphoglycolate phosphatase (218 aa).

Catalysis depends on Asp-7, which acts as the Nucleophile. 3 residues coordinate Mg(2+): Asp-7, Asp-9, and Asp-167.

The protein belongs to the HAD-like hydrolase superfamily. CbbY/CbbZ/Gph/YieH family. Mg(2+) serves as cofactor.

The catalysed reaction is 2-phosphoglycolate + H2O = glycolate + phosphate. Its pathway is organic acid metabolism; glycolate biosynthesis; glycolate from 2-phosphoglycolate: step 1/1. Its function is as follows. Specifically catalyzes the dephosphorylation of 2-phosphoglycolate. Is involved in the dissimilation of the intracellular 2-phosphoglycolate formed during the DNA repair of 3'-phosphoglycolate ends, a major class of DNA lesions induced by oxidative stress. The chain is Phosphoglycolate phosphatase from Cereibacter sphaeroides (Rhodobacter sphaeroides).